The following is a 361-amino-acid chain: Protein-glutamate methylesterase/protein-glutamine glutaminase 1 (361 aa).

A Response regulatory domain is found at 10–127; sequence KVLVVDDSAL…REGIEEKAQE (118 aa). D61 carries the post-translational modification 4-aspartylphosphate. A CheB-type methylesterase domain is found at 167 to 359; that stretch reads FATTDKLIAV…ASVKRWYAEN (193 aa). Catalysis depends on residues S179, H205, and D301.

Belongs to the CheB family. Phosphorylated by CheA. Phosphorylation of the N-terminal regulatory domain activates the methylesterase activity.

The protein localises to the cytoplasm. The catalysed reaction is [protein]-L-glutamate 5-O-methyl ester + H2O = L-glutamyl-[protein] + methanol + H(+). The enzyme catalyses L-glutaminyl-[protein] + H2O = L-glutamyl-[protein] + NH4(+). In terms of biological role, involved in chemotaxis. Part of a chemotaxis signal transduction system that modulates chemotaxis in response to various stimuli. Catalyzes the demethylation of specific methylglutamate residues introduced into the chemoreceptors (methyl-accepting chemotaxis proteins or MCP) by CheR. Also mediates the irreversible deamidation of specific glutamine residues to glutamic acid. The protein is Protein-glutamate methylesterase/protein-glutamine glutaminase 1 of Hahella chejuensis (strain KCTC 2396).